The following is a 30-amino-acid chain: Nattererin-1 (30 aa).

Expressed by the skin glands.

It is found in the secreted. In terms of biological role, probably has antibacterial activity. The chain is Nattererin-1 from Physalaemus nattereri (Cuyaba dwarf frog).